A 207-amino-acid polypeptide reads, in one-letter code: MPLPDFRLIRLLPLAALVLTACSVTTPKGPGKSPDSPQWRQHQQDVRNLNQYQTRGAFAYISDQQKVYARFFWQQTGQDRYRLLLTNPLGSTELELNAQPGNVQLVDNKGQRYTADDAEEMIGKLTGMPIPLNSLRQWILGLPGDATDYKLDDQYRLSEITYSQNGKNWKVVYGGYDTKTQPAMPANMELTDGGQRIKLKMDNWIVK.

Positions 1-21 (MPLPDFRLIRLLPLAALVLTA) are cleaved as a signal peptide. A lipid anchor (N-palmitoyl cysteine) is attached at Cys-22. Cys-22 carries S-diacylglycerol cysteine lipidation.

Belongs to the LolB family. In terms of assembly, monomer.

The protein localises to the cell outer membrane. In terms of biological role, plays a critical role in the incorporation of lipoproteins in the outer membrane after they are released by the LolA protein. The polypeptide is Outer-membrane lipoprotein LolB (Escherichia coli (strain K12 / MC4100 / BW2952)).